Reading from the N-terminus, the 132-residue chain is Small ribosomal subunit protein uS9 (132 aa).

Residues 103 to 132 (NGLLTRDDRTKERKKPGLKRARKAPQYTKR) are disordered. The segment covering 114-132 (ERKKPGLKRARKAPQYTKR) has biased composition (basic residues).

This sequence belongs to the universal ribosomal protein uS9 family.

In Dehalococcoides mccartyi (strain CBDB1), this protein is Small ribosomal subunit protein uS9.